The following is a 569-amino-acid chain: Probable protein phosphatase 2C BIPP2C1 (569 aa).

Disordered stretches follow at residues 120-214 and 251-279; these read EVSP…KVTG and SLDD…GSSI. The span at 179 to 188 shows a compositional bias: basic and acidic residues; the sequence is ESERGSDADG. A PPM-type phosphatase domain is found at 329-564; the sequence is AAMLPHPSKV…DDVTVVVSVV (236 aa). Mn(2+)-binding residues include Asp-358, Gly-359, Asp-488, and Asp-555.

Belongs to the PP2C family. Requires Mg(2+) as cofactor. The cofactor is Mn(2+).

It catalyses the reaction O-phospho-L-seryl-[protein] + H2O = L-seryl-[protein] + phosphate. The catalysed reaction is O-phospho-L-threonyl-[protein] + H2O = L-threonyl-[protein] + phosphate. In terms of biological role, may play a role in responses to biotic and abiotic stresses. The chain is Probable protein phosphatase 2C BIPP2C1 (BIPP2C1) from Oryza sativa subsp. japonica (Rice).